Consider the following 297-residue polypeptide: ClpXP adapter protein SpxH (297 aa).

The protein belongs to the SpxH family. In terms of assembly, interacts with Spx.

The protein localises to the cytoplasm. In terms of biological role, adapter protein required for efficient degradation of Spx by ClpXP under non-stress conditions. Interaction with Spx stabilizes Spx and exposes the C-terminus of Spx for recognition and proteolysis by ClpXP. This chain is ClpXP adapter protein SpxH, found in Bacillus cereus (strain ATCC 10987 / NRS 248).